A 414-amino-acid chain; its full sequence is MSEYIRVTEDENDEPIEIPSEDDGTVLLSTVTAQFPGACGLRYRNPVSQCMWGVRLVEGILHAPEAGWGNLVYVVNYPKDNKRKMDETDASSAVKVKRAVQKTSDLIVLGLPWKTTEQDLKEYFSTFGEVLMVQVKKDIKTGHSKGFGFVRFTDYETQVKVMSQRHMIDGRWCDCKLPNSKQSPDEPLRSRKVFVGRCTEDMTADELQQFFAQYGEVVDVFIPKPFRAFAFVTFADDQVAQSLCGEDLIIKGISVHISNAEPKHNSNRQLERGGRFGGNPGGFGNQGGFGNSRGGGGGLGNNQGSNMGGGMNFGAFSINPAMMAAAQAALQSSWGMMGMLASQQNQSGPSGNNQPQGNMQREQNQGFSSGNNSYGGSNSGAAIGWGSASNAGSSSGFNGGFGSSMDSKSSGWGM.

RRM domains lie at 104-200 (SDLI…RCTE) and 191-262 (RKVF…NAEP). Positions 261-274 (EPKHNSNRQLERGG) are enriched in basic and acidic residues. Disordered regions lie at residues 261–303 (EPKH…GNNQ) and 341–373 (ASQQ…GNNS). Residues 275 to 303 (RFGGNPGGFGNQGGFGNSRGGGGGLGNNQ) are compositionally biased toward gly residues. Over residues 342-373 (SQQNQSGPSGNNQPQGNMQREQNQGFSSGNNS) the composition is skewed to low complexity.

As to quaternary structure, homodimer.

It localises to the nucleus. The protein resides in the cytoplasm. Its subcellular location is the stress granule. The protein localises to the mitochondrion. Its function is as follows. Probably involved in transcriptional repression. May play a role in the maintenance of the circadian clock periodicity. This chain is TAR DNA-binding protein 43 (TARDBP), found in Gallus gallus (Chicken).